The following is a 303-amino-acid chain: Putative HTH-type transcriptional regulatory protein Mpal_0031 (303 aa).

The HTH cro/C1-type domain occupies 132–189; it reads LRGLREQRNMSLGDLGAVLGVSRRTISKYESGMGTTLEIAIKIEEVFDSGVIESIDLL. The H-T-H motif DNA-binding region spans 143 to 162; the sequence is LGDLGAVLGVSRRTISKYES.

This Methanosphaerula palustris (strain ATCC BAA-1556 / DSM 19958 / E1-9c) protein is Putative HTH-type transcriptional regulatory protein Mpal_0031.